The following is a 177-amino-acid chain: Retrograde regulation protein 1 (177 aa).

The interval 1–24 is disordered; the sequence is MSSIPAGTDPGSCGANFKNDRKRR. Residues 11 to 96 form the bHLH domain; sequence GSCGANFKND…TQAVEYISHL (86 aa). S50 and S52 each carry phosphoserine. Disordered stretches follow at residues 52-82 and 147-177; these read SNDT…KPNK and LAAT…GNGS. T60 carries the post-translational modification Phosphothreonine. The segment covering 168–177 has biased composition (gly residues); the sequence is GGYGEYGNGS.

In terms of assembly, binds DNA as a heterodimer with RTG3.

It localises to the nucleus. Required for a novel path of interorganelle communication between mitochondria, peroxisomes and the nucleus, thereby maintaining a functional metabolic interaction between the tricarboxylic acid and glyoxylate cycles. Transcription factor that regulates CIT2 gene expression. Binds to two identical sites oriented as inverted repeats 28 bp apart in a regulatory upstream activation sequence element (UASR) in the CIT2 promoter. The core binding site is 5'-GGTCAC-3'. The polypeptide is Retrograde regulation protein 1 (RTG1) (Saccharomyces cerevisiae (strain ATCC 204508 / S288c) (Baker's yeast)).